The following is a 429-amino-acid chain: Aspartate--tRNA(Asp/Asn) ligase (429 aa).

Glu-166 lines the L-aspartate pocket. Residues Gln-188 to Lys-191 form an aspartate region. Arg-210 contacts L-aspartate. Residues Arg-210–Glu-212, Arg-218–Leu-220, and Glu-352 each bind ATP. Residues Glu-352 and Ser-355 each contribute to the Mg(2+) site. L-aspartate is bound by residues Ser-355 and Arg-359. Gly-400–Arg-403 is an ATP binding site.

The protein belongs to the class-II aminoacyl-tRNA synthetase family. Type 2 subfamily. As to quaternary structure, homodimer. Mg(2+) is required as a cofactor.

It localises to the cytoplasm. It catalyses the reaction tRNA(Asx) + L-aspartate + ATP = L-aspartyl-tRNA(Asx) + AMP + diphosphate. Its function is as follows. Aspartyl-tRNA synthetase with relaxed tRNA specificity since it is able to aspartylate not only its cognate tRNA(Asp) but also tRNA(Asn). Reaction proceeds in two steps: L-aspartate is first activated by ATP to form Asp-AMP and then transferred to the acceptor end of tRNA(Asp/Asn). This is Aspartate--tRNA(Asp/Asn) ligase from Methanocorpusculum labreanum (strain ATCC 43576 / DSM 4855 / Z).